Reading from the N-terminus, the 95-residue chain is YcgL domain-containing protein Sden_1630 (95 aa).

Residues 1–85 (MICTVYKSRR…PKANLLEEHK (85 aa)) form the YcgL domain.

The chain is YcgL domain-containing protein Sden_1630 from Shewanella denitrificans (strain OS217 / ATCC BAA-1090 / DSM 15013).